The chain runs to 160 residues: Ribosomal RNA large subunit methyltransferase H (160 aa).

S-adenosyl-L-methionine-binding positions include glycine 108 and 127–132 (FGKMTW).

It belongs to the RNA methyltransferase RlmH family. As to quaternary structure, homodimer.

It is found in the cytoplasm. It catalyses the reaction pseudouridine(1915) in 23S rRNA + S-adenosyl-L-methionine = N(3)-methylpseudouridine(1915) in 23S rRNA + S-adenosyl-L-homocysteine + H(+). Specifically methylates the pseudouridine at position 1915 (m3Psi1915) in 23S rRNA. The polypeptide is Ribosomal RNA large subunit methyltransferase H (Beijerinckia indica subsp. indica (strain ATCC 9039 / DSM 1715 / NCIMB 8712)).